Here is a 455-residue protein sequence, read N- to C-terminus: Ribulose bisphosphate carboxylase large chain (455 aa).

The residue at position 5 (Lys5) is an N6,N6,N6-trimethyllysine. Positions 114 and 164 each coordinate substrate. Lys166 acts as the Proton acceptor in catalysis. Lys168 is a binding site for substrate. Residues Lys192, Asp194, and Glu195 each contribute to the Mg(2+) site. Lys192 bears the N6-carboxylysine mark. The active-site Proton acceptor is the His285. Substrate-binding residues include Arg286, His318, and Ser370.

This sequence belongs to the RuBisCO large chain family. Type I subfamily. As to quaternary structure, heterohexadecamer of 8 large chains and 8 small chains; disulfide-linked. The disulfide link is formed within the large subunit homodimers. Mg(2+) serves as cofactor. In terms of processing, the disulfide bond which can form in the large chain dimeric partners within the hexadecamer appears to be associated with oxidative stress and protein turnover.

The protein localises to the plastid. Its subcellular location is the chloroplast. The enzyme catalyses 2 (2R)-3-phosphoglycerate + 2 H(+) = D-ribulose 1,5-bisphosphate + CO2 + H2O. It carries out the reaction D-ribulose 1,5-bisphosphate + O2 = 2-phosphoglycolate + (2R)-3-phosphoglycerate + 2 H(+). RuBisCO catalyzes two reactions: the carboxylation of D-ribulose 1,5-bisphosphate, the primary event in carbon dioxide fixation, as well as the oxidative fragmentation of the pentose substrate in the photorespiration process. Both reactions occur simultaneously and in competition at the same active site. The sequence is that of Ribulose bisphosphate carboxylase large chain from Lupinus nanus (Sky lupine).